The primary structure comprises 446 residues: Transcription factor Dp-2 (446 aa).

Residue T2 is modified to N-acetylthreonine. S24 carries the phosphoserine modification. Residues 60-82 (PQMIISTPQRLTSSGSVLIGSPY) form an interaction with CEBPA region. A Nuclear localization signal motif is present at residues 103-118 (GDRKRARKFIDSDFSE). Position 122 is a phosphoserine (S122). A DNA-binding region spans residues 129–210 (GKGLRHFSMK…KKEIKWIGLP (82 aa)). The DEF box signature appears at 176–210 (DQKNIRRRVYDALNVLMAMNIISKEKKEIKWIGLP). The interval 219–292 (NLEIEKQRRI…RKTVIDCSIS (74 aa)) is dimerization. The tract at residues 229–261 (ERIKQKRAQLQELLLQQIAFKNLVQRNRQNEQQ) is DCB1. Residues 274-330 (LPFIIINTSRKTVIDCSISSDKFEYLFNFDNTFEIHDDIEVLKRMGMSFGLESGKCS) are DCB2. The segment covering 409-419 (SHQSSSAASHC) has biased composition (low complexity). The disordered stretch occupies residues 409–446 (SHQSSSAASHCSESRGETPCSFNDEDEEDDEEDSSSPE). The segment covering 431–446 (NDEDEEDDEEDSSSPE) has biased composition (acidic residues).

The protein belongs to the E2F/DP family. As to quaternary structure, component of the DRTF1/E2F transcription factor complex. Forms heterodimers with E2F family members. The complex can interact with hypophosphorylated retinoblastoma protein RB1 and related proteins (RBL1 and RBL2) that inhibit the E2F transactivation domain. During the cell cycle, RB becomes phosphorylated in mid-to-late G1 phase, detaches from the DRTF1/E2F complex rendering E2F transcriptionally active. Viral oncoproteins, notably E1A, T-antigen and HPV E7, are capable of sequestering RB protein, thus releasing the active complex. Interacts with GMCL. Component of the DREAM complex (also named LINC complex) at least composed of E2F4, E2F5, LIN9, LIN37, LIN52, LIN54, MYBL1, MYBL2, RBL1, RBL2, RBBP4, TFDP1 and TFDP2. The complex exists in quiescent cells where it represses cell cycle-dependent genes. It dissociates in S phase when LIN9, LIN37, LIN52 and LIN54 form a subcomplex that binds to MYBL2. The complex TFDP2:E2F1 interacts with CEBPA; the interaction prevents CEBPA binding to target genes promoters and represses its transcriptional activity. Ser-24 is probably phosphorylated by CDK2. In terms of tissue distribution, high levels in heart and skeletal muscle. Also found in placenta, kidney, brain, lung and liver. The presence as well as the abundance of the different transcripts appear to vary significantly in different tissues and cell lines.

It is found in the nucleus. In terms of biological role, can stimulate E2F-dependent transcription. Binds DNA cooperatively with E2F family members through the E2 recognition site, 5'-TTTC[CG]CGC-3', found in the promoter region of a number of genes whose products are involved in cell cycle regulation or in DNA replication. The TFDP2:E2F complex functions in the control of cell-cycle progression from G1 to S phase. The E2F1:DP complex appears to mediate both cell proliferation and apoptosis. Blocks adipocyte differentiation by repressing CEBPA binding to its target gene promoters. The chain is Transcription factor Dp-2 (TFDP2) from Homo sapiens (Human).